A 418-amino-acid polypeptide reads, in one-letter code: UDP-N-acetylglucosamine 1-carboxyvinyltransferase (418 aa).

22–23 (KN) lines the phosphoenolpyruvate pocket. R91 is a binding site for UDP-N-acetyl-alpha-D-glucosamine. The active-site Proton donor is C115. The residue at position 115 (C115) is a 2-(S-cysteinyl)pyruvic acid O-phosphothioketal. Residues D305 and I327 each contribute to the UDP-N-acetyl-alpha-D-glucosamine site.

It belongs to the EPSP synthase family. MurA subfamily.

Its subcellular location is the cytoplasm. The enzyme catalyses phosphoenolpyruvate + UDP-N-acetyl-alpha-D-glucosamine = UDP-N-acetyl-3-O-(1-carboxyvinyl)-alpha-D-glucosamine + phosphate. It functions in the pathway cell wall biogenesis; peptidoglycan biosynthesis. Its function is as follows. Cell wall formation. Adds enolpyruvyl to UDP-N-acetylglucosamine. This Aeromonas salmonicida (strain A449) protein is UDP-N-acetylglucosamine 1-carboxyvinyltransferase.